Here is a 188-residue protein sequence, read N- to C-terminus: Ribosome-recycling factor (188 aa).

The protein belongs to the RRF family.

It is found in the cytoplasm. In terms of biological role, responsible for the release of ribosomes from messenger RNA at the termination of protein biosynthesis. May increase the efficiency of translation by recycling ribosomes from one round of translation to another. In Phenylobacterium zucineum (strain HLK1), this protein is Ribosome-recycling factor.